Consider the following 130-residue polypeptide: Small ribosomal subunit protein uS8 (130 aa).

It belongs to the universal ribosomal protein uS8 family. In terms of assembly, part of the 30S ribosomal subunit. Contacts proteins S5 and S12.

Functionally, one of the primary rRNA binding proteins, it binds directly to 16S rRNA central domain where it helps coordinate assembly of the platform of the 30S subunit. In Pectobacterium atrosepticum (strain SCRI 1043 / ATCC BAA-672) (Erwinia carotovora subsp. atroseptica), this protein is Small ribosomal subunit protein uS8.